Consider the following 181-residue polypeptide: uncharacterized protein (181 aa).

To M.jannaschii MJ1106.

This is an uncharacterized protein from Methanothermobacter thermautotrophicus (strain ATCC 29096 / DSM 1053 / JCM 10044 / NBRC 100330 / Delta H) (Methanobacterium thermoautotrophicum).